We begin with the raw amino-acid sequence, 104 residues long: Large ribosomal subunit protein uL24 (104 aa).

Belongs to the universal ribosomal protein uL24 family. As to quaternary structure, part of the 50S ribosomal subunit.

Its function is as follows. One of two assembly initiator proteins, it binds directly to the 5'-end of the 23S rRNA, where it nucleates assembly of the 50S subunit. Functionally, one of the proteins that surrounds the polypeptide exit tunnel on the outside of the subunit. The sequence is that of Large ribosomal subunit protein uL24 from Pectobacterium carotovorum subsp. carotovorum (strain PC1).